The following is a 387-amino-acid chain: Acetylserotonin O-methyltransferase (387 aa).

Residues tyrosine 153, tryptophan 170, glutamate 216, 246 to 248 (GDF), and arginine 263 contribute to the S-adenosyl-L-methionine site. Residue histidine 266 is the Proton donor/acceptor of the active site. Positions 267 and 317 each coordinate substrate. Residues 354–387 (AARGGGAGARSDGGGGDATSQTGSGTGSEVGAQD) form a disordered region. The segment covering 356 to 370 (RGGGAGARSDGGGGD) has biased composition (gly residues).

The protein belongs to the class I-like SAM-binding methyltransferase superfamily. Cation-independent O-methyltransferase family. In terms of assembly, homodimer. Expressed predominantly in the pineal gland (at protein level). Very low expression, if any, in the retina.

It catalyses the reaction N-acetylserotonin + S-adenosyl-L-methionine = melatonin + S-adenosyl-L-homocysteine + H(+). It functions in the pathway aromatic compound metabolism; melatonin biosynthesis; melatonin from serotonin: step 1/2. Its function is as follows. Catalyzes the transfer of a methyl group onto N-acetylserotonin, producing melatonin (N-acetyl-5-methoxytryptamine). The protein is Acetylserotonin O-methyltransferase (Asmt) of Mus musculus (Mouse).